Here is a 375-residue protein sequence, read N- to C-terminus: GTPase HflX (375 aa).

In terms of domain architecture, Hflx-type G spans 194–371 (PHIAIVGYAS…RIATLLAGTK (178 aa)). Residues 200–207 (GYASAGKT), 225–229 (FTTIT), 246–249 (DTVG), 314–317 (NKID), and 349–351 (SAK) each bind GTP. Mg(2+) is bound by residues Thr-207 and Thr-227.

It belongs to the TRAFAC class OBG-HflX-like GTPase superfamily. HflX GTPase family. As to quaternary structure, monomer. Associates with the 50S ribosomal subunit. Mg(2+) serves as cofactor.

The protein localises to the cytoplasm. In terms of biological role, GTPase that associates with the 50S ribosomal subunit and may have a role during protein synthesis or ribosome biogenesis. The protein is GTPase HflX of Hyperthermus butylicus (strain DSM 5456 / JCM 9403 / PLM1-5).